The sequence spans 448 residues: Cysteine--tRNA ligase (448 aa).

Residue cysteine 27 participates in Zn(2+) binding. The 'HIGH' region signature appears at 29–39; sequence PTVYNYIHVGN. Zn(2+) contacts are provided by cysteine 210, histidine 235, and glutamate 239. The 'KMSKS' region motif lies at 267–271; that stretch reads KMSKS. Lysine 270 is a binding site for ATP.

It belongs to the class-I aminoacyl-tRNA synthetase family. In terms of assembly, monomer. Zn(2+) serves as cofactor.

It localises to the cytoplasm. The catalysed reaction is tRNA(Cys) + L-cysteine + ATP = L-cysteinyl-tRNA(Cys) + AMP + diphosphate. The polypeptide is Cysteine--tRNA ligase (Lactococcus lactis subsp. lactis (strain IL1403) (Streptococcus lactis)).